The chain runs to 742 residues: MGSSINYPGFVTKSAHLADTSTDASISCEEATSSQEAKKNFFQRDYNMMKKAPAPTKSKLSLALQTSKSSSSANGTVQEDTSSKTEDFSTKSIKKKPDSGVESHVSIQSDSGPQSDSDLDSDSSISSCDERNEESLKDYRPGGYHPAFKGEPYKDARYILVRKLGWGHFSTVWLAKDMVNNTHVAMKIVRGDKVYTEAAEDEIKLLQRVNDADNTKEDSMGANHILKLLDHFNHKGPNGVHVVMVFEVLGENLLALIKKYEHRGIPLIYVKQISKQLLLGLDYMHRRCGIIHTDIKPENVLMEIGDVEGIVQMVEALDKQKREAKRLQRHVSRSSDITANDSSDEKWAECQTSMPCGSSSNSKSRSIEKDLSKRCFRRPRRHTIITGSQPLPSPISSSNFFEMRAHFCGSSHNSFSSVSGNRNIPSSINNNSINNGIGIKNSNNSFLNSVPHSVTRMFINEDSNDNNNNDNSKNKNNNNNNSNNNNNEDIMNTPLHEEQLADSLSTFDISNISQSSDTNGPYISNTMDSNSNVSTDINSPENLIQIKIADLGNACWYDEHYTNSIQTREYRSPEVLLGAPWGCGADIWSTACLIFELITGDFLFEPDEGHSYTKDDDHIAQIIELLGELPSYLLRNGKYTRTFFNSRGLLRNISKLKFWPLEDVLTEKYKFSKDEAKEISDFLSPMLQLDPRKRADAGGLVNHPWLKDTLGMEEIRVPDRELYGSGSDIPGWFEEVRDHKRH.

The interval 13 to 146 (KSAHLADTST…KDYRPGGYHP (134 aa)) is disordered. A compositionally biased stretch (polar residues) spans 19-35 (DTSTDASISCEEATSSQ). Low complexity predominate over residues 56 to 73 (TKSKLSLALQTSKSSSSA). The segment covering 81–101 (TSSKTEDFSTKSIKKKPDSGV) has biased composition (basic and acidic residues). The span at 106 to 127 (SIQSDSGPQSDSDLDSDSSISS) shows a compositional bias: low complexity. A compositionally biased stretch (basic and acidic residues) spans 128 to 140 (CDERNEESLKDYR). Residues 158-706 (YILVRKLGWG…AGGLVNHPWL (549 aa)) enclose the Protein kinase domain. Residues 164–172 (LGWGHFSTV) and lysine 187 contribute to the ATP site. The Proton acceptor role is filled by aspartate 294. A phosphothreonine mark is found at threonine 383 and threonine 386. Phosphoserine is present on residues serine 388, serine 393, serine 410, serine 427, serine 432, serine 445, serine 449, and serine 453. Residues 459-491 (INEDSNDNNNNDNSKNKNNNNNNSNNNNNEDIM) are disordered. Residues 465 to 489 (DNNNNDNSKNKNNNNNNSNNNNNED) are compositionally biased toward low complexity.

It belongs to the protein kinase superfamily. Ser/Thr protein kinase family.

It carries out the reaction L-seryl-[protein] + ATP = O-phospho-L-seryl-[protein] + ADP + H(+). The enzyme catalyses L-threonyl-[protein] + ATP = O-phospho-L-threonyl-[protein] + ADP + H(+). Constitutively active kinase, specifically and sequentially phosphorylates serine/arginine (SR)-type shuttling mRNA binding proteins in their RS dipeptide repeats. This Saccharomyces cerevisiae (strain ATCC 204508 / S288c) (Baker's yeast) protein is Serine/threonine-protein kinase SKY1 (SKY1).